The following is a 463-amino-acid chain: DNA-binding protein K10 (463 aa).

Polar residues predominate over residues 1-13 (MVSKNQFYQNWTM). The interval 1–304 (MVSKNQFYQN…RNGPGPGPMM (304 aa)) is disordered. Residues 14-50 (QSQQQHPHQMQQQFQQQQQPNLQHRNNQSNNNNCNNN) are compositionally biased toward low complexity. Residues 85-94 (QMMFSSSQMP) show a composition bias toward polar residues. A run of 7 repeats spans residues 87 to 94 (MFSSSQMP), 95 to 102 (SDPLYIDF), 103 to 110 (SSPPPGFK), 111 to 118 (HNQVGSPK), 119 to 126 (KKSMKGIK), 127 to 134 (QQQHPSPN), and 135 to 142 (QQQPPSPN). The 7 X approximate tandem repeats stretch occupies residues 87–142 (MFSSSQMPSDPLYIDFSSPPPGFKHNQVGSPKKKSMKGIKQQQHPSPNQQQPPSPN). Residues 142 to 193 (NQQQHPSPNQQQHPSPNQQQHPNSNQQQHLSPNQQQGKMNNQNNNHMNQSQQ) are compositionally biased toward low complexity. The span at 194-214 (PFNNQMNGSDWQRHPGNNPNQ) shows a compositional bias: polar residues. Composition is skewed to pro residues over residues 225–270 (GPPP…PPVP) and 282–291 (GGPPPPPPPL). A DNA-binding region (H-T-H motif) is located at residues 397-416 (DELFAQYKGQRDKFVSLYEA). The tract at residues 426–463 (AATVKAKDAKSDKDKNAISSQSAAPKAGSAKDATIPNP) is disordered. Over residues 430 to 441 (KAKDAKSDKDKN) the composition is skewed to basic and acidic residues.

As to quaternary structure, interacts (via N-terminus) with sqd; the interaction is direct and may be involved in localization of sqd to the oocyte during oogenesis.

The protein localises to the nucleus. In terms of biological role, may be involved in localization of sqd to the oocyte during oogenesis. The chain is DNA-binding protein K10 (fs(1)K10) from Drosophila melanogaster (Fruit fly).